Reading from the N-terminus, the 377-residue chain is Chaperone protein DnaJ (377 aa).

The 66-residue stretch at 5 to 70 folds into the J domain; it reads DYYEVLGLQK…QKRAAYDQYG (66 aa). The CR-type zinc-finger motif lies at 134–212; that stretch reads GCKKDIRLST…CHGDGRVQKA (79 aa). Zn(2+)-binding residues include cysteine 147, cysteine 150, cysteine 164, cysteine 167, cysteine 186, cysteine 189, cysteine 200, and cysteine 203. 4 CXXCXGXG motif repeats span residues 147–154, 164–171, 186–193, and 200–207; these read CDNCHGTG, CPHCHGAG, CPSCHGTG, and CHSCHGDG.

The protein belongs to the DnaJ family. Homodimer. The cofactor is Zn(2+).

The protein resides in the cytoplasm. Its function is as follows. Participates actively in the response to hyperosmotic and heat shock by preventing the aggregation of stress-denatured proteins and by disaggregating proteins, also in an autonomous, DnaK-independent fashion. Unfolded proteins bind initially to DnaJ; upon interaction with the DnaJ-bound protein, DnaK hydrolyzes its bound ATP, resulting in the formation of a stable complex. GrpE releases ADP from DnaK; ATP binding to DnaK triggers the release of the substrate protein, thus completing the reaction cycle. Several rounds of ATP-dependent interactions between DnaJ, DnaK and GrpE are required for fully efficient folding. Also involved, together with DnaK and GrpE, in the DNA replication of plasmids through activation of initiation proteins. The protein is Chaperone protein DnaJ of Haemophilus ducreyi (strain 35000HP / ATCC 700724).